Consider the following 213-residue polypeptide: T-cell surface glycoprotein CD8 beta chain (213 aa).

Residues 1 to 21 form the signal peptide; sequence MQPWLWLVFSMKLAALWSSSA. An Ig-like V-type domain is found at 22–133; sequence LIQTPSSLLV…KMVFGTGTKL (112 aa). Residues 22 to 175 are Extracellular-facing; sequence LIQTPSSLLV…QKGLTCSLTT (154 aa). Residue N34 is glycosylated (N-linked (GlcNAc...) asparagine). An intrachain disulfide couples C41 to C117. Residues 176–196 form a helical membrane-spanning segment; the sequence is LSLLVVCILLLLAFLGVAVYF. The Cytoplasmic segment spans residues 197 to 213; sequence YCVRRRARIHFMKQFHK.

As to quaternary structure, forms disulfide-linked heterodimers with CD8A at the cell surface. Interacts with CD3D; this interaction couples TCR-CD3 with CD8. Interacts with LCK. Post-translationally, palmitoylated at the cytoplasmic tail and thereby targets the heterodimer CD8A/CD8B to lipid rafts unlike CD8A homodimers.

Its subcellular location is the membrane. In terms of biological role, integral membrane glycoprotein that plays an essential role in the immune response and serves multiple functions in responses against both external and internal offenses. In T-cells, functions primarily as a coreceptor for MHC class I molecule:peptide complex. The antigens presented by class I peptides are derived from cytosolic proteins while class II derived from extracellular proteins. Interacts simultaneously with the T-cell receptor (TCR) and the MHC class I proteins presented by antigen presenting cells (APCs). In turn, recruits the Src kinase LCK to the vicinity of the TCR-CD3 complex. A palmitoylation site in the cytoplasmic tail of CD8B chain contributes to partitioning of CD8 into the plasma membrane lipid rafts where signaling proteins are enriched. Once LCK recruited, it initiates different intracellular signaling pathways by phosphorylating various substrates ultimately leading to lymphokine production, motility, adhesion and activation of cytotoxic T-lymphocytes (CTLs). Additionally, plays a critical role in thymic selection of CD8+ T-cells. The polypeptide is T-cell surface glycoprotein CD8 beta chain (Cd8b) (Mus musculus (Mouse)).